Reading from the N-terminus, the 192-residue chain is dTTP/UTP pyrophosphatase (192 aa).

Asp-70 serves as the catalytic Proton acceptor.

This sequence belongs to the Maf family. YhdE subfamily. The cofactor is a divalent metal cation.

The protein localises to the cytoplasm. The catalysed reaction is dTTP + H2O = dTMP + diphosphate + H(+). The enzyme catalyses UTP + H2O = UMP + diphosphate + H(+). In terms of biological role, nucleoside triphosphate pyrophosphatase that hydrolyzes dTTP and UTP. May have a dual role in cell division arrest and in preventing the incorporation of modified nucleotides into cellular nucleic acids. The sequence is that of dTTP/UTP pyrophosphatase from Clostridium perfringens (strain ATCC 13124 / DSM 756 / JCM 1290 / NCIMB 6125 / NCTC 8237 / Type A).